The sequence spans 185 residues: Ribosome-recycling factor (185 aa).

Belongs to the RRF family.

It localises to the cytoplasm. Functionally, responsible for the release of ribosomes from messenger RNA at the termination of protein biosynthesis. May increase the efficiency of translation by recycling ribosomes from one round of translation to another. The polypeptide is Ribosome-recycling factor (Salmonella arizonae (strain ATCC BAA-731 / CDC346-86 / RSK2980)).